We begin with the raw amino-acid sequence, 107 residues long: U1-lycotoxin-Ls1b (107 aa).

The signal sequence occupies residues 1–20; sequence MMKVLVVVALLVTLISYSSS. The propeptide occupies 21 to 41; the sequence is EGIDDLEADELLSLMANEQTR. 4 disulfide bridges follow: Cys44–Cys59, Cys51–Cys68, Cys58–Cys86, and Cys70–Cys84.

This sequence belongs to the neurotoxin 19 (CSTX) family. 04 (U1-Lctx) subfamily. As to expression, expressed by the venom gland.

The protein localises to the secreted. In Lycosa singoriensis (Wolf spider), this protein is U1-lycotoxin-Ls1b.